The chain runs to 192 residues: ADP-ribosylation factor-like protein 4C (192 aa).

Gly-2 is lipidated: N-myristoyl glycine. Residues Gly-20 to Thr-27, Asp-68 to Gln-72, and Asn-127 to Asp-130 contribute to the GTP site.

The protein belongs to the small GTPase superfamily. Arf family. Interacts with CYTH2. Interacts with alpha tubulin; interaction is independent on the ARL4C GTP or GDP binding status. As to expression, expressed in several tumor cell lines (at protein level). Expressed in lung, brain, leukocytes and placenta.

It localises to the cell projection. It is found in the filopodium. The protein localises to the cell membrane. Its subcellular location is the cytoplasm. In terms of biological role, small GTP-binding protein which cycles between an inactive GDP-bound and an active GTP-bound form, and the rate of cycling is regulated by guanine nucleotide exchange factors (GEF) and GTPase-activating proteins (GAP). GTP-binding protein that does not act as an allosteric activator of the cholera toxin catalytic subunit. May be involved in transport between a perinuclear compartment and the plasma membrane, apparently linked to the ABCA1-mediated cholesterol secretion pathway. Recruits CYTH1, CYTH2, CYTH3 and CYTH4 to the plasma membrane in the GDP-bound form. Regulates the microtubule-dependent intracellular vesicular transport from early endosome to recycling endosome process. The sequence is that of ADP-ribosylation factor-like protein 4C (ARL4C) from Homo sapiens (Human).